We begin with the raw amino-acid sequence, 207 residues long: 8-oxoguanine DNA glycosylase/AP lyase (207 aa).

Catalysis depends on residues lysine 128 and aspartate 146.

This sequence belongs to the type-2 OGG1 family.

The enzyme catalyses 2'-deoxyribonucleotide-(2'-deoxyribose 5'-phosphate)-2'-deoxyribonucleotide-DNA = a 3'-end 2'-deoxyribonucleotide-(2,3-dehydro-2,3-deoxyribose 5'-phosphate)-DNA + a 5'-end 5'-phospho-2'-deoxyribonucleoside-DNA + H(+). In terms of biological role, catalyzes the excision of an oxidatively damaged form of guanine (7,8-dihydro-8-oxoguanine = 8-oxoG) from DNA. Also cleaves the DNA backbone at apurinic/apyrimidinic sites (AP sites). The protein is 8-oxoguanine DNA glycosylase/AP lyase of Saccharolobus solfataricus (strain ATCC 35092 / DSM 1617 / JCM 11322 / P2) (Sulfolobus solfataricus).